Consider the following 104-residue polypeptide: Flagellar hook-basal body complex protein FliE (104 aa).

It belongs to the FliE family.

The protein localises to the bacterial flagellum basal body. This is Flagellar hook-basal body complex protein FliE from Escherichia coli (strain SE11).